Reading from the N-terminus, the 273-residue chain is Eukaryotic translation initiation factor 3 subunit G-2 (273 aa).

Positions 165 to 193 (KYVPPFMKDGGGGPGGKNWGRGRERDDSS) are disordered. Positions 173–183 (DGGGGPGGKNW) are enriched in gly residues. The region spanning 193–271 (SAVRISNLSE…LILCVEWSKP (79 aa)) is the RRM domain.

It belongs to the eIF-3 subunit G family. Component of the eukaryotic translation initiation factor 3 (eIF-3) complex. The eIF-3 complex interacts with pix.

It is found in the cytoplasm. Its function is as follows. RNA-binding component of the eukaryotic translation initiation factor 3 (eIF-3) complex, which is involved in protein synthesis of a specialized repertoire of mRNAs and, together with other initiation factors, stimulates binding of mRNA and methionyl-tRNAi to the 40S ribosome. The eIF-3 complex specifically targets and initiates translation of a subset of mRNAs involved in cell proliferation. This subunit can bind 18S rRNA. The protein is Eukaryotic translation initiation factor 3 subunit G-2 of Drosophila yakuba (Fruit fly).